We begin with the raw amino-acid sequence, 193 residues long: dCTP deaminase (193 aa).

Residues 110-115, Asp128, 136-138, Tyr171, Lys178, and Gln182 contribute to the dCTP site; these read RSSLAR and VLE. The active-site Proton donor/acceptor is the Glu138.

It belongs to the dCTP deaminase family. Homotrimer.

The catalysed reaction is dCTP + H2O + H(+) = dUTP + NH4(+). It functions in the pathway pyrimidine metabolism; dUMP biosynthesis; dUMP from dCTP (dUTP route): step 1/2. Catalyzes the deamination of dCTP to dUTP. This chain is dCTP deaminase, found in Buchnera aphidicola subsp. Schizaphis graminum (strain Sg).